The sequence spans 1247 residues: Structural polyprotein (1247 aa).

Residues 36 to 67 form a host transcription inhibition region; sequence RPAGQLAQLISAVSRLALRTVPQKPRRTRKIK. Positions 53 to 103 are disordered; sequence LRTVPQKPRRTRKIKKQKQVKQEQQSTRNQKKKAPKQKQTQKKKRPGRRER. Composition is skewed to basic residues over residues 59–71 and 81–100; these read KPRRTRKIKKQKQ and NQKKKAPKQKQTQKKKRPGR. The short motif at 60 to 98 is the Nuclear localization signal element; sequence PRRTRKIKKQKQVKQEQQSTRNQKKKAPKQKQTQKKKRP. The tract at residues 83–113 is binding to the viral RNA; it reads KKKAPKQKQTQKKKRPGRRERMCMKIENDCI. A ribosome-binding region spans residues 98–112; the sequence is PGRRERMCMKIENDC. An intrachain disulfide couples cysteine 112 to cysteine 127. A Peptidase S3 domain is found at 112 to 260; sequence CIFEVKHEGK…KITPEGSVEW (149 aa). The active-site Charge relay system is histidine 138. Positions 143–153 match the Nuclear export signal motif; sequence IDNADLAKLAF. The interaction with spike glycoprotein E2 stretch occupies residues 154-159; the sequence is KRSSKY. The active-site Charge relay system is the aspartate 160. A dimerization of the capsid protein region spans residues 182–192; the sequence is PEGYYNWHHGA. The active-site Charge relay system is serine 212. The interval 218–222 is dimerization of the capsid protein; it reads DNKGR. The interval 261–273 is functions as an uncleaved signal peptide for the precursor of protein E3/E2; the sequence is SLALPVMCLLANT. 9 cysteine pairs are disulfide-bonded: cysteine 268–cysteine 277, cysteine 282–cysteine 286, cysteine 285–cysteine 317, cysteine 343–cysteine 449, cysteine 346–cysteine 352, cysteine 415–cysteine 429, cysteine 477–cysteine 590, cysteine 525–cysteine 549, and cysteine 527–cysteine 544. N-linked (GlcNAc...) asparagine; by host glycosylation occurs at asparagine 272. At 325 to 691 the chain is on the extracellular side; sequence NARENFNVYK…YYYELYPTTT (367 aa). Asparagine 587 carries an N-linked (GlcNAc...) asparagine; by host glycan. The chain crosses the membrane as a helical span at residues 692-712; sequence IAVLAAASIVVASLVGLSLGM. The Cytoplasmic portion of the chain corresponds to 713 to 747; sequence CICARRRCITPYELTPGATIPFLLGILCCVKTAKA. The interval 715–719 is interaction with the capsid protein; sequence CARRR. S-palmitoyl cysteine; by host attachment occurs at residues cysteine 720, cysteine 740, and cysteine 741. Residues 720-740 form a transient transmembrane before p62-6K protein processing region; the sequence is CITPYELTPGATIPFLLGILC. A disulfide bond links cysteine 720 and cysteine 741. The Extracellular portion of the chain corresponds to 748 to 762; sequence ASYYEAATYLWNEQQ. Residues 763-783 traverse the membrane as a helical segment; sequence PLFWLQLLIPLSAAIVVCNCL. Residues 784–787 are Cytoplasmic-facing; that stretch reads KLLP. The helical transmembrane segment at 788 to 808 threads the bilayer; it reads CCCKTLTFLAVMSIGARTVSA. At 809–1223 the chain is on the extracellular side; sequence YEHATVIPNT…AMSWVQKITG (415 aa). 4 cysteine pairs are disulfide-bonded: cysteine 857–cysteine 922, cysteine 870–cysteine 902, cysteine 871–cysteine 904, and cysteine 876–cysteine 886. Residues 892-909 form an E1 fusion peptide loop region; the sequence is VYPFMWGGAYCFCDAENT. Asparagine 949 and asparagine 1078 each carry an N-linked (GlcNAc...) asparagine; by host glycan. 4 cysteine pairs are disulfide-bonded: cysteine 1067–cysteine 1079, cysteine 1109–cysteine 1184, cysteine 1114–cysteine 1188, and cysteine 1136–cysteine 1178. A helical membrane pass occupies residues 1224 to 1244; sequence GVGLVVAIAALILIIVLCVSF. A lipid anchor (S-palmitoyl cysteine; by host) is attached at cysteine 1241. Topologically, residues 1245 to 1247 are cytoplasmic; the sequence is SRH.

As to quaternary structure, homodimer. Homomultimer. Interacts with host karyopherin KPNA4; this interaction allows the nuclear import of the viral capsid protein. Interacts with spike glycoprotein E2. Interacts with host IRAK1; the interaction leads to inhibition of IRAK1-dependent signaling. The precursor of protein E3/E2 and E1 form a heterodimer shortly after synthesis. In terms of assembly, the precursor of protein E3/E2 and E1 form a heterodimer shortly after synthesis. Processing of the precursor of protein E3/E2 into E2 and E3 results in a heterodimer of the spike glycoproteins E2 and E1. Spike at virion surface are constituted of three E2-E1 heterodimers. After target cell attachment and endocytosis, E1 change conformation to form homotrimers. Interacts with 6K protein. As to quaternary structure, interacts with spike glycoprotein E1. Processing of the precursor of protein E3/E2 into E2 and E3 results in a heterodimer of the spike glycoproteins E2 and E1. Spike at virion surface are constituted of a trimer of E2-E1 heterodimers. Interacts with 6K protein. Interacts with host MXRA8; this interaction mediates virus entry. Oligomer. Interacts with spike glycoprotein E1. Interacts with spike glycoprotein E2. Structural polyprotein: Specific enzymatic cleavages in vivo yield mature proteins. Capsid protein is auto-cleaved during polyprotein translation, unmasking a signal peptide at the N-terminus of the precursor of E3/E2. The remaining polyprotein is then targeted to the host endoplasmic reticulum, where host signal peptidase cleaves it into pE2, 6K and E1 proteins. pE2 is further processed to mature E3 and E2 by host furin in trans-Golgi vesicle. In terms of processing, palmitoylated via thioester bonds. These palmitoylations may induce disruption of the C-terminus transmembrane. This would result in the reorientation of E2 C-terminus from lumenal to cytoplasmic side. Post-translationally, N-glycosylated. Palmitoylated via thioester bonds.

Its subcellular location is the virion. The protein resides in the host cytoplasm. The protein localises to the host cell membrane. It is found in the host nucleus. It localises to the virion membrane. Its subcellular location is the host Golgi apparatus. The protein resides in the host trans-Golgi network. The protein localises to the host endoplasmic reticulum. It catalyses the reaction Autocatalytic release of the core protein from the N-terminus of the togavirus structural polyprotein by hydrolysis of a -Trp-|-Ser- bond.. In terms of biological role, forms an icosahedral capsid with a T=4 symmetry composed of 240 copies of the capsid protein surrounded by a lipid membrane through which penetrate 80 spikes composed of trimers of E1-E2 heterodimers. The capsid protein binds to the viral RNA genome at a site adjacent to a ribosome binding site for viral genome translation following genome release. Possesses a protease activity that results in its autocatalytic cleavage from the nascent structural protein. Following its self-cleavage, the capsid protein transiently associates with ribosomes, and within several minutes the protein binds to viral RNA and rapidly assembles into icosahedric core particles. The resulting nucleocapsid eventually associates with the cytoplasmic domain of the spike glycoprotein E2 at the cell membrane, leading to budding and formation of mature virions. In case of infection, new virions attach to target cells and after clathrin-mediated endocytosis their membrane fuses with the host endosomal membrane. This leads to the release of the nucleocapsid into the cytoplasm, followed by an uncoating event necessary for the genomic RNA to become accessible. The uncoating might be triggered by the interaction of capsid proteins with ribosomes. Binding of ribosomes would release the genomic RNA since the same region is genomic RNA-binding and ribosome-binding. Specifically inhibits interleukin-1 receptor-associated kinase 1/IRAK1-dependent signaling during viral entry, representing a means by which the alphaviruses may evade innate immune detection and activation prior to viral gene expression. Functionally, provides the signal sequence for the translocation of the precursor of protein E3/E2 to the host endoplasmic reticulum. Furin-cleaved E3 remains associated with spike glycoprotein E1 and mediates pH protection of the latter during the transport via the secretory pathway. After virion release from the host cell, the assembly protein E3 is gradually released in the extracellular space. Plays a role in viral attachment to target host cell, by binding to the cell receptor MXRA8. Synthesized as a p62 precursor which is processed by furin at the cell membrane just before virion budding, giving rise to E2-E1 heterodimer. The p62-E1 heterodimer is stable, whereas E2-E1 is unstable and dissociate at low pH. p62 is processed at the last step, presumably to avoid E1 fusion activation before its final export to cell surface. E2 C-terminus contains a transitory transmembrane that would be disrupted by palmitoylation, resulting in reorientation of the C-terminal tail from lumenal to cytoplasmic side. This step is critical since E2 C-terminus is involved in budding by interacting with capsid proteins. This release of E2 C-terminus in cytoplasm occurs lately in protein export, and precludes premature assembly of particles at the endoplasmic reticulum membrane. Its function is as follows. Acts as a viroporin that participates in virus glycoprotein processing and transport to the plasma membrane, cell permeabilization and budding of viral particles. Disrupts the calcium homeostasis of the cell, probably at the endoplasmic reticulum level. This leads to cytoplasmic calcium elevation. Because of its lipophilic properties, the 6K protein is postulated to influence the selection of lipids that interact with the transmembrane domains of the glycoproteins, which, in turn, affects the deformability of the bilayer required for the extreme curvature that occurs as budding proceeds. Present in low amount in virions, about 3% compared to viral glycoproteins. In terms of biological role, class II viral fusion protein. Fusion activity is inactive as long as E1 is bound to E2 in mature virion. After virus attachment to target cell via host MXRA8 and endocytosis, acidification of the endosome induce dissociation of E1/E2 heterodimer and concomitant trimerization of the E1 subunits. This E1 trimer is fusion active, and promotes release of viral nucleocapsid in cytoplasm after endosome and viral membrane fusion. Efficient fusion requires the presence of cholesterol and sphingolipid in the target membrane. This chain is Structural polyprotein, found in Anopheles (Human).